The chain runs to 542 residues: Hydroxylamine reductase (542 aa).

Cys-5, Cys-8, Cys-17, and Cys-23 together coordinate [4Fe-4S] cluster. 8 residues coordinate hybrid [4Fe-2O-2S] cluster: His-237, Glu-261, Cys-305, Cys-397, Cys-425, Cys-450, Glu-485, and Lys-487. At Cys-397 the chain carries Cysteine persulfide.

It belongs to the HCP family. [4Fe-4S] cluster serves as cofactor. Requires hybrid [4Fe-2O-2S] cluster as cofactor.

It localises to the cytoplasm. The catalysed reaction is A + NH4(+) + H2O = hydroxylamine + AH2 + H(+). In terms of biological role, catalyzes the reduction of hydroxylamine to form NH(3) and H(2)O. The chain is Hydroxylamine reductase from Acetivibrio thermocellus (strain ATCC 27405 / DSM 1237 / JCM 9322 / NBRC 103400 / NCIMB 10682 / NRRL B-4536 / VPI 7372) (Clostridium thermocellum).